The following is a 378-amino-acid chain: Histidine decarboxylase (378 aa).

Histidine 120 contributes to the substrate binding site. At lysine 233 the chain carries N6-(pyridoxal phosphate)lysine. Serine 323 is a catalytic residue.

It belongs to the group II decarboxylase family. In terms of assembly, homotetramer. Pyridoxal 5'-phosphate serves as cofactor.

It carries out the reaction L-histidine + H(+) = histamine + CO2. The sequence is that of Histidine decarboxylase (hdc) from Morganella morganii (Proteus morganii).